Reading from the N-terminus, the 58-residue chain is DNA-directed RNA polymerases I, II, and III subunit RPABC4 (58 aa).

Zn(2+)-binding residues include C19, C22, C36, and C39. A C4-type zinc finger spans residues 19–39; that stretch reads CGECHTENEIKSRDPIRCREC.

Belongs to the archaeal Rpo12/eukaryotic RPC10 RNA polymerase subunit family. In terms of assembly, component of the RNA polymerase I (Pol I), RNA polymerase II (Pol II) and RNA polymerase III (Pol III) complexes consisting of at least 13, 12 and 17 subunits, respectively. Pol I complex consists of a ten-subunit catalytic core composed of POLR1A/RPA1, POLR1B/RPA2, POLR1C/RPAC1, POLR1D/RPAC2, POLR1H/RPA12, POLR2E/RPABC1, POLR2F/RPABC2, POLR2H/RPABC3, POLR2K/RPABC4 and POLR2L/RPABC5; a mobile stalk subunit POLR1F/RPA43 protruding from the core and additional subunits homologous to general transcription factors POLR1E/RPA49 and POLR1G/RPA34. Part of Pol I pre-initiation complex (PIC), in which Pol I core assembles with RRN3 and promoter-bound UTBF and SL1/TIF-IB complex. Pol II complex contains a ten-subunit catalytic core composed of POLR2A/RPB1, POLR2B/RPB2, POLR2C/RPB3, POLR2I/RPB9, POLR2J/RPB11, POLR2E/RPABC1, POLR2F/RPABC2, POLR2H/RPABC3, POLR2K/RPABC4 and POLR2L/RPABC5 and a mobile stalk composed of two subunits POLR2D/RPB4 and POLR2G/RPB7. Part of Pol II(G) complex, in which Pol II core associates with an additional subunit POLR2M; unlike conventional Pol II, Pol II(G) functions as a transcriptional repressor. Part of TBP-based Pol II pre-initiation complex (PIC), in which Pol II core assembles with general transcription factors and other specific initiation factors including GTF2E1, GTF2E2, GTF2F1, GTF2F2, TCEA1, ERCC2, ERCC3, GTF2H2, GTF2H3, GTF2H4, GTF2H5, GTF2A1, GTF2A2, GTF2B and TBP; this large multi-subunit PIC complex mediates DNA unwinding and targets Pol II core to the transcription start site where the first phosphodiester bond forms. Pol III complex consists of a ten-subunit catalytic core composed of POLR3A/RPC1, POLR3B/RPC2, POLR1C/RPAC1, POLR1D/RPAC2, POLR3K/RPC10, POLR2E/RPABC1, POLR2F/RPABC2, POLR2H/RPABC3, POLR2K/RPABC4 and POLR2L/RPABC5; a mobile stalk composed of two subunits POLR3H/RPC8 and CRCP/RPC9, protruding from the core and functioning primarily in transcription initiation; and additional subunits homologous to general transcription factors of the RNA polymerase II machinery, POLR3C/RPC3-POLR3F/RPC6-POLR3G/RPC7 heterotrimer required for transcription initiation and POLR3D/RPC4-POLR3E/RPC5 heterodimer involved in both transcription initiation and termination.

It is found in the nucleus. Its subcellular location is the nucleolus. DNA-dependent RNA polymerase catalyzes the transcription of DNA into RNA using the four ribonucleoside triphosphates as substrates. Common component of RNA polymerases I, II and III which synthesize ribosomal RNA precursors, mRNA precursors and many functional non-coding RNAs, and a small RNAs, such as 5S rRNA and tRNAs, respectively. This is DNA-directed RNA polymerases I, II, and III subunit RPABC4 (POLR2K) from Bos taurus (Bovine).